A 216-amino-acid polypeptide reads, in one-letter code: Urease accessory protein UreG (216 aa).

24–31 lines the GTP pocket; it reads GPVGSGKT.

This sequence belongs to the SIMIBI class G3E GTPase family. UreG subfamily. Homodimer. UreD, UreF and UreG form a complex that acts as a GTP-hydrolysis-dependent molecular chaperone, activating the urease apoprotein by helping to assemble the nickel containing metallocenter of UreC. The UreE protein probably delivers the nickel.

It localises to the cytoplasm. Facilitates the functional incorporation of the urease nickel metallocenter. This process requires GTP hydrolysis, probably effectuated by UreG. This is Urease accessory protein UreG from Variovorax paradoxus (strain S110).